A 272-amino-acid chain; its full sequence is uncharacterized protein (272 aa).

Its subcellular location is the periplasm. Its function is as follows. May be involved in ulvan degradation. Ulvan is the main polysaccharide component of the Ulvales (green seaweed) cell wall. It is composed of disaccharide building blocks comprising 3-sulfated rhamnose (Rha3S) linked to D-glucuronic acid (GlcA), L-iduronic acid (IduA), or D-xylose (Xyl). This is an uncharacterized protein from Formosa agariphila (strain DSM 15362 / KCTC 12365 / LMG 23005 / KMM 3901 / M-2Alg 35-1).